Consider the following 83-residue polypeptide: Small ribosomal subunit protein uS17c (83 aa).

The protein belongs to the universal ribosomal protein uS17 family. In terms of assembly, part of the 30S ribosomal subunit.

The protein resides in the plastid. The protein localises to the chloroplast. One of the primary rRNA binding proteins, it binds specifically to the 5'-end of 16S ribosomal RNA. This is Small ribosomal subunit protein uS17c (rps17) from Pyropia yezoensis (Susabi-nori).